Here is a 153-residue protein sequence, read N- to C-terminus: Cytochrome c-type biogenesis protein CcmE (153 aa).

The Cytoplasmic portion of the chain corresponds to 1 to 6 (MNARRR). Residues 7-27 (LWSVLMLILAVGTAATLTIMA) traverse the membrane as a helical; Signal-anchor for type II membrane protein segment. Residues 28–153 (LRHNLTYLYM…LDTPIAETTP (126 aa)) are Periplasmic-facing. Histidine 121 and tyrosine 125 together coordinate heme. Polar residues predominate over residues 131–141 (ANKMQPTPTQH). Residues 131–153 (ANKMQPTPTQHTHLDTPIAETTP) form a disordered region.

It belongs to the CcmE/CycJ family.

The protein resides in the cell inner membrane. In terms of biological role, heme chaperone required for the biogenesis of c-type cytochromes. Transiently binds heme delivered by CcmC and transfers the heme to apo-cytochromes in a process facilitated by CcmF and CcmH. This is Cytochrome c-type biogenesis protein CcmE from Xylella fastidiosa (strain Temecula1 / ATCC 700964).